Consider the following 326-residue polypeptide: Phospho-N-acetylmuramoyl-pentapeptide-transferase (326 aa).

A run of 10 helical transmembrane segments spans residues 13-33 (ILAP…IFIP), 57-77 (GTPT…ILIM), 85-105 (EMIL…DDIL), 121-141 (MILL…NVGT), 155-175 (NLGI…TNAV), 181-201 (IDGL…IIGF), 208-228 (VAVF…FNAF), 232-252 (IFMG…IALM), 257-277 (LFVI…IIQV), and 305-325 (VKIV…GFVA).

The protein belongs to the glycosyltransferase 4 family. MraY subfamily. Mg(2+) serves as cofactor.

The protein resides in the cell membrane. It carries out the reaction UDP-N-acetyl-alpha-D-muramoyl-L-alanyl-gamma-D-glutamyl-meso-2,6-diaminopimeloyl-D-alanyl-D-alanine + di-trans,octa-cis-undecaprenyl phosphate = di-trans,octa-cis-undecaprenyl diphospho-N-acetyl-alpha-D-muramoyl-L-alanyl-D-glutamyl-meso-2,6-diaminopimeloyl-D-alanyl-D-alanine + UMP. The protein operates within cell wall biogenesis; peptidoglycan biosynthesis. Functionally, catalyzes the initial step of the lipid cycle reactions in the biosynthesis of the cell wall peptidoglycan: transfers peptidoglycan precursor phospho-MurNAc-pentapeptide from UDP-MurNAc-pentapeptide onto the lipid carrier undecaprenyl phosphate, yielding undecaprenyl-pyrophosphoryl-MurNAc-pentapeptide, known as lipid I. The sequence is that of Phospho-N-acetylmuramoyl-pentapeptide-transferase from Clostridium beijerinckii (strain ATCC 51743 / NCIMB 8052) (Clostridium acetobutylicum).